The primary structure comprises 307 residues: 2-haloacid dehalogenase, configuration-inverting (307 aa).

The protein belongs to the HAD-like hydrolase superfamily. S-2-haloalkanoic acid dehalogenase family. As to quaternary structure, homodimer.

The catalysed reaction is an (S)-2-haloacid + H2O = a (2R)-2-hydroxycarboxylate + a halide anion + H(+). It catalyses the reaction an (R)-2-haloacid + H2O = a (2S)-2-hydroxycarboxylate + a halide anion + H(+). Its function is as follows. Dehalogenates both (S)- and (R)-2-haloalkanoic acids to the corresponding (R)- and (S)-hydroxyalkanoic acids, respectively, with inversion of configuration at C-2. Acts on 2-haloalkanoic acids whose carbon chain lengths are five or less. The polypeptide is 2-haloacid dehalogenase, configuration-inverting (Pseudomonas sp. (strain 113)).